The sequence spans 147 residues: Hemoglobin subunit epsilon (147 aa).

Positions His3–His147 constitute a Globin domain. Phosphoserine is present on Ser51. The heme b site is built by His64 and His93.

The protein belongs to the globin family. Red blood cells.

In terms of biological role, hemoglobin epsilon chain is a beta-type chain found in early embryos. In Oryctolagus cuniculus (Rabbit), this protein is Hemoglobin subunit epsilon (HBE1).